The sequence spans 220 residues: Iron-sulfur cluster repair protein YtfE (220 aa).

This sequence belongs to the RIC family. YtfE subfamily. Homodimer.

Its subcellular location is the cytoplasm. Functionally, di-iron-containing protein involved in the repair of iron-sulfur clusters damaged by oxidative and nitrosative stress conditions. In Salmonella paratyphi A (strain AKU_12601), this protein is Iron-sulfur cluster repair protein YtfE.